The sequence spans 82 residues: MKMDTGTKVRTILFLIAWVNQLLSFDNLEPIPVDETTAQQVYDAVSVLFTIVVTVWTSFKNNYLTLKGRKQREALKKNGLTK.

Residues 1-8 (MKMDTGTK) lie on the Cytoplasmic side of the membrane. A helical transmembrane segment spans residues 9–25 (VRTILFLIAWVNQLLSF). The Periplasmic segment spans residues 26-40 (DNLEPIPVDETTAQQ). A helical transmembrane segment spans residues 41 to 57 (VYDAVSVLFTIVVTVWT). The Cytoplasmic segment spans residues 58 to 82 (SFKNNYLTLKGRKQREALKKNGLTK).

In terms of assembly, homomultimer. Interacts with isoform Antiholin; this interaction blocks the holin homomultimerization and delays host cell lysis.

It is found in the host cell inner membrane. Probably functions as a holin together with holin-like protein 26. Accumulates harmlessly in the cytoplasmic membrane until it reaches a critical concentration that triggers the formation of micron-scale pores (holes) causing host cell membrane disruption and endolysin escape into the periplasmic space. Determines the precise timing of host cell lysis. In terms of biological role, counteracts the aggregation of the holin molecules and thus of pore formation. The chain is Putative antiholin (26) from Bacillus subtilis (Bacteriophage SPP1).